We begin with the raw amino-acid sequence, 288 residues long: Pyridoxal kinase PdxY (288 aa).

Substrate contacts are provided by residues S12 and 47-48 (TQ). ATP contacts are provided by residues D114, E151, K184, and 211 to 214 (RPLL). A substrate-binding site is contributed by D225.

It belongs to the pyridoxine kinase family. PdxY subfamily. Homodimer. Mg(2+) serves as cofactor.

The catalysed reaction is pyridoxal + ATP = pyridoxal 5'-phosphate + ADP + H(+). Its pathway is cofactor metabolism; pyridoxal 5'-phosphate salvage; pyridoxal 5'-phosphate from pyridoxal: step 1/1. In terms of biological role, pyridoxal kinase involved in the salvage pathway of pyridoxal 5'-phosphate (PLP). Catalyzes the phosphorylation of pyridoxal to PLP. This is Pyridoxal kinase PdxY from Pseudomonas aeruginosa (strain UCBPP-PA14).